A 314-amino-acid polypeptide reads, in one-letter code: DNA topoisomerase 1B (314 aa).

Positions 77-314 (VQNRNAKRDR…VDHVKSSTDG (238 aa)) constitute a Topo IB-type catalytic domain. The active-site O-(3'-phospho-DNA)-tyrosine intermediate is Y274.

Belongs to the type IB topoisomerase family.

The enzyme catalyses ATP-independent breakage of single-stranded DNA, followed by passage and rejoining.. Functionally, releases the supercoiling and torsional tension of DNA introduced during the DNA replication and transcription by transiently cleaving and rejoining one strand of the DNA duplex. Introduces a single-strand break via transesterification at the specific target site 5'-[CT]CCTTp site in duplex DNA. The scissile phosphodiester is attacked by the catalytic tyrosine of the enzyme, resulting in the formation of a DNA-(3'-phosphotyrosyl)-enzyme intermediate and the expulsion of a 5'-OH DNA strand. The free DNA strand then undergoes passage around the unbroken strand thus removing DNA supercoils. Finally, in the religation step, the DNA 5'-OH attacks the covalent intermediate to expel the active-site tyrosine and restore the DNA phosphodiester backbone. This is DNA topoisomerase 1B (TOP1) from Vaccinia virus (strain Ankara) (VACV).